Here is a 99-residue protein sequence, read N- to C-terminus: UPF0213 protein YazA (99 aa).

The GIY-YIG domain maps to 4–79 (NNHFFYVVKC…KKLTRKKKEL (76 aa)).

Belongs to the UPF0213 family.

This chain is UPF0213 protein YazA (yazA), found in Bacillus subtilis (strain 168).